Reading from the N-terminus, the 154-residue chain is 6,7-dimethyl-8-ribityllumazine synthase (154 aa).

5-amino-6-(D-ribitylamino)uracil is bound by residues phenylalanine 21, 55-57, and 79-81; these read AFE and CVI. Position 84–85 (84–85) interacts with (2S)-2-hydroxy-3-oxobutyl phosphate; sequence AT. Histidine 87 serves as the catalytic Proton donor. Phenylalanine 112 lines the 5-amino-6-(D-ribitylamino)uracil pocket. Arginine 126 contacts (2S)-2-hydroxy-3-oxobutyl phosphate.

The protein belongs to the DMRL synthase family. Forms an icosahedral capsid composed of 60 subunits, arranged as a dodecamer of pentamers.

It carries out the reaction (2S)-2-hydroxy-3-oxobutyl phosphate + 5-amino-6-(D-ribitylamino)uracil = 6,7-dimethyl-8-(1-D-ribityl)lumazine + phosphate + 2 H2O + H(+). It participates in cofactor biosynthesis; riboflavin biosynthesis; riboflavin from 2-hydroxy-3-oxobutyl phosphate and 5-amino-6-(D-ribitylamino)uracil: step 1/2. Functionally, catalyzes the formation of 6,7-dimethyl-8-ribityllumazine by condensation of 5-amino-6-(D-ribitylamino)uracil with 3,4-dihydroxy-2-butanone 4-phosphate. This is the penultimate step in the biosynthesis of riboflavin. The protein is 6,7-dimethyl-8-ribityllumazine synthase of Staphylococcus aureus (strain MRSA252).